The chain runs to 119 residues: Beta-2-microglobulin (119 aa).

An N-terminal signal peptide occupies residues 1–20 (MARFVVVALLVLLSVSDLEA). Positions 25-114 (PKIQVYSRYP…VTFLTPKTVK (90 aa)) constitute an Ig-like C1-type domain. Cys45 and Cys100 are disulfide-bonded.

It belongs to the beta-2-microglobulin family. In terms of assembly, heterodimer of an alpha chain and a beta chain. Beta-2-microglobulin is the beta-chain of major histocompatibility complex class I molecules.

It is found in the secreted. In terms of biological role, component of the class I major histocompatibility complex (MHC). Involved in the presentation of peptide antigens to the immune system. This Leontocebus fuscicollis (Brown-mantled tamarin) protein is Beta-2-microglobulin (B2M).